The chain runs to 284 residues: Bifunctional protein FolD (284 aa).

Residues Gly165–Ser167, Ser190, and Ile231 contribute to the NADP(+) site.

Belongs to the tetrahydrofolate dehydrogenase/cyclohydrolase family. As to quaternary structure, homodimer.

It carries out the reaction (6R)-5,10-methylene-5,6,7,8-tetrahydrofolate + NADP(+) = (6R)-5,10-methenyltetrahydrofolate + NADPH. It catalyses the reaction (6R)-5,10-methenyltetrahydrofolate + H2O = (6R)-10-formyltetrahydrofolate + H(+). Its pathway is one-carbon metabolism; tetrahydrofolate interconversion. Functionally, catalyzes the oxidation of 5,10-methylenetetrahydrofolate to 5,10-methenyltetrahydrofolate and then the hydrolysis of 5,10-methenyltetrahydrofolate to 10-formyltetrahydrofolate. This Clostridium kluyveri (strain ATCC 8527 / DSM 555 / NBRC 12016 / NCIMB 10680 / K1) protein is Bifunctional protein FolD.